We begin with the raw amino-acid sequence, 485 residues long: Subtilisin-like protease 1 (485 aa).

Residues 1–19 (MGIFRFISISLAAVSAANA) form the signal peptide. Positions 20–116 (GHILSMGHAK…VEPDTTITIH (97 aa)) are excised as a propeptide. In terms of domain architecture, Inhibitor I9 spans 34-116 (SYIVVMKDGT…VEPDTTITIH (83 aa)). The 275-residue stretch at 126–400 (SWGLARISSQ…NILINNGDAK (275 aa)) folds into the Peptidase S8 domain. Catalysis depends on charge relay system residues Asp-158 and His-190. Asn-251 carries N-linked (GlcNAc...) asparagine glycosylation. Ser-345 functions as the Charge relay system in the catalytic mechanism. A compositionally biased stretch (polar residues) spans 377–394 (GTSSVTNPGPGTRTNILI). The tract at residues 377–462 (GTSSVTNPGP…HTPFPNDDFN (86 aa)) is disordered. Positions 409 to 418 (PSQPPKPSQP) are enriched in pro residues. Low complexity predominate over residues 419-428 (SKPQQPSEPQ). Positions 433 to 455 (PQEPAPGQPAPAPAPVPQHPHTP) are enriched in pro residues.

Belongs to the peptidase S8 family.

The protein localises to the secreted. Its function is as follows. Secreted subtilisin-like serine protease with keratinolytic activity that contributes to pathogenicity. The protein is Subtilisin-like protease 1 (SUB1) of Arthroderma otae (strain ATCC MYA-4605 / CBS 113480) (Microsporum canis).